The chain runs to 874 residues: Translation initiation factor IF-2 (874 aa).

Residues 1 to 289 (MKIKNAQLTK…KHYDEHSVQR (289 aa)) form a disordered region. Residues 31 to 48 (SSSEKPTTKVPEKVAKEK) show a composition bias toward basic and acidic residues. The segment covering 81–104 (RSSFASEDSTIPSPVSVDTESTAF) has biased composition (polar residues). Residues 105–118 (SPPVVEEVVSPLES) show a composition bias toward low complexity. Composition is skewed to basic and acidic residues over residues 144 to 158 (PPKKEAELVVKKEPP) and 186 to 198 (PKKEDKPAPKERT). Residues 199–211 (GTVQTKPQQSSEV) are compositionally biased toward polar residues. A compositionally biased stretch (basic and acidic residues) spans 228-260 (YRRDTSKRPGSDFRDRSKKDDSPKAFTGRDRYG). Over residues 271–280 (RKKRVQKTKK) the composition is skewed to basic residues. In terms of domain architecture, tr-type G spans 380–549 (IRPPIVAFMG…ALQAEVLELK (170 aa)). The G1 stretch occupies residues 389–396 (GHVDHGKT). 389-396 (GHVDHGKT) provides a ligand contact to GTP. The interval 414 to 418 (AITQH) is G2. The tract at residues 435-438 (DTPG) is G3. GTP is bound by residues 435–439 (DTPGH) and 489–492 (NKCD). Residues 489–492 (NKCD) form a G4 region. Residues 525–527 (SAK) are G5.

Belongs to the TRAFAC class translation factor GTPase superfamily. Classic translation factor GTPase family. IF-2 subfamily.

It is found in the cytoplasm. Functionally, one of the essential components for the initiation of protein synthesis. Protects formylmethionyl-tRNA from spontaneous hydrolysis and promotes its binding to the 30S ribosomal subunits. Also involved in the hydrolysis of GTP during the formation of the 70S ribosomal complex. The sequence is that of Translation initiation factor IF-2 from Chlamydia abortus (strain DSM 27085 / S26/3) (Chlamydophila abortus).